We begin with the raw amino-acid sequence, 122 residues long: Small ribosomal subunit protein uS13 (122 aa).

The tract at residues 97 to 122 (PVRGQRTHTNARTRKGPAKAIAGKKK) is disordered.

The protein belongs to the universal ribosomal protein uS13 family. In terms of assembly, part of the 30S ribosomal subunit. Forms a loose heterodimer with protein S19. Forms two bridges to the 50S subunit in the 70S ribosome.

In terms of biological role, located at the top of the head of the 30S subunit, it contacts several helices of the 16S rRNA. In the 70S ribosome it contacts the 23S rRNA (bridge B1a) and protein L5 of the 50S subunit (bridge B1b), connecting the 2 subunits; these bridges are implicated in subunit movement. Contacts the tRNAs in the A and P-sites. The protein is Small ribosomal subunit protein uS13 of Rhizobium rhizogenes (strain K84 / ATCC BAA-868) (Agrobacterium radiobacter).